A 161-amino-acid chain; its full sequence is Phosphopantetheine adenylyltransferase (161 aa).

S11 serves as a coordination point for substrate. Residues S11 to F12 and H19 each bind ATP. The substrate site is built by K43, L75, and R89. ATP is bound by residues G90–R92, E100, and Y125–S131.

This sequence belongs to the bacterial CoaD family. Homohexamer. Requires Mg(2+) as cofactor.

Its subcellular location is the cytoplasm. The enzyme catalyses (R)-4'-phosphopantetheine + ATP + H(+) = 3'-dephospho-CoA + diphosphate. The protein operates within cofactor biosynthesis; coenzyme A biosynthesis; CoA from (R)-pantothenate: step 4/5. Its function is as follows. Reversibly transfers an adenylyl group from ATP to 4'-phosphopantetheine, yielding dephospho-CoA (dPCoA) and pyrophosphate. The polypeptide is Phosphopantetheine adenylyltransferase (Staphylococcus carnosus (strain TM300)).